A 215-amino-acid chain; its full sequence is Octanoyltransferase (215 aa).

The 176-residue stretch at 31–206 (PDSQDEIWLV…QLVKHLDYAE (176 aa)) folds into the BPL/LPL catalytic domain. Substrate contacts are provided by residues 70–77 (RGGQVTYH), 137–139 (SLG), and 150–152 (GLA). Residue Cys-168 is the Acyl-thioester intermediate of the active site.

It belongs to the LipB family.

Its subcellular location is the cytoplasm. It catalyses the reaction octanoyl-[ACP] + L-lysyl-[protein] = N(6)-octanoyl-L-lysyl-[protein] + holo-[ACP] + H(+). It functions in the pathway protein modification; protein lipoylation via endogenous pathway; protein N(6)-(lipoyl)lysine from octanoyl-[acyl-carrier-protein]: step 1/2. Functionally, catalyzes the transfer of endogenously produced octanoic acid from octanoyl-acyl-carrier-protein onto the lipoyl domains of lipoate-dependent enzymes. Lipoyl-ACP can also act as a substrate although octanoyl-ACP is likely to be the physiological substrate. This Pseudomonas putida (strain GB-1) protein is Octanoyltransferase.